We begin with the raw amino-acid sequence, 378 residues long: Lactosylceramide 1,3-N-acetyl-beta-D-glucosaminyltransferase (378 aa).

Residues 1-14 lie on the Cytoplasmic side of the membrane; sequence MRMLVSGRRVKKWQ. A helical; Signal-anchor for type II membrane protein membrane pass occupies residues 15-35; it reads LIIQLFATCFLASLMFFWEPI. Residues 36 to 378 are Lumenal-facing; sequence DNHIVSHMKS…DTYPCRAAFI (343 aa). Asparagine 59 is a glycosylation site (N-linked (GlcNAc...) asparagine).

Belongs to the glycosyltransferase 31 family. As to expression, widely expressed. Highly expressed in lung, colon, placenta, testis, pituitary gland and cerebellum. Weakly expressed in brain, liver, spleen, lymph node and thymus.

It localises to the golgi apparatus membrane. The catalysed reaction is a beta-D-Gal-(1-&gt;4)-beta-D-Glc-(1&lt;-&gt;1)-Cer(d18:1(4E)) + UDP-N-acetyl-alpha-D-glucosamine = a beta-D-GlcNAc-(1-&gt;3)-beta-D-Gal-(1-&gt;4)-beta-D-Glc-(1&lt;-&gt;1)-Cer(d18:1(4E)) + UDP + H(+). The enzyme catalyses a neolactoside nLc4Cer(d18:1(4E)) + UDP-N-acetyl-alpha-D-glucosamine = a neolactoside IV(3)-beta-GlcNAc-nLc4Cer(d18:1(4E)) + UDP + H(+). It participates in protein modification; protein glycosylation. Its function is as follows. Beta-1,3-N-acetylglucosaminyltransferase that plays a key role in the synthesis of lacto- or neolacto-series carbohydrate chains on glycolipids, notably by participating in biosynthesis of HNK-1 and Lewis X carbohydrate structures. Has strong activity toward lactosylceramide (LacCer) and neolactotetraosylceramide (nLc(4)Cer; paragloboside), resulting in the synthesis of Lc(3)Cer and neolactopentaosylceramide (nLc(5)Cer), respectively. Probably plays a central role in regulating neolacto-series glycolipid synthesis during embryonic development. This is Lactosylceramide 1,3-N-acetyl-beta-D-glucosaminyltransferase from Homo sapiens (Human).